The sequence spans 804 residues: Probable copper-exporting P-type ATPase (804 aa).

The Cytoplasmic portion of the chain corresponds to 1 to 101 (MVKDTYISSA…VEHLSRMKRK (101 aa)). One can recognise an HMA 1 domain in the interval 16–82 (MERTVRVTGM…VIEDLGYGVV (67 aa)). Residues cysteine 27 and cysteine 30 each coordinate Cu(+). A helical transmembrane segment spans residues 102 to 122 (LYVAAFAGVLLLFLAHFISLP). At 123–128 (YEDFVQ) the chain is on the extracellular side. The helical transmembrane segment at 129–149 (LLIALPAIFYSGSSIFKAAFS) threads the bilayer. Residues 150-159 (ALRRRTLNMD) are Cytoplasmic-facing. Residues 160–180 (VMYSMGVGAAFLASVLSTAGV) form a helical membrane-spanning segment. Topologically, residues 181 to 186 (LPREYS) are extracellular. Residues 187-204 (FYETSVLLLAFLLLGRTL) traverse the membrane as a helical segment. Topologically, residues 205 to 339 (EARAKSRTGE…PIQRLADKVV (135 aa)) are cytoplasmic. The chain crosses the membrane as a helical span at residues 340 to 360 (AYFIPTVLLVAISAFIYWYFI). The Extracellular segment spans residues 361–364 (AHAP). Residues 365–385 (LLFAFTTLIAVLVVACPCAFG) form a helical membrane-spanning segment. Over 386 to 680 (LATPTALTVG…KIKQNIFWAL (295 aa)) the chain is Cytoplasmic. Aspartate 424 serves as the catalytic 4-aspartylphosphate intermediate. ATP-binding positions include 457-462 (ERRSEH) and 490-501 (GEGVVADGILVG). The Mg(2+) site is built by aspartate 618 and aspartate 622. The helical transmembrane segment at 681–701 (IYNVILIPAAAGLLYPIFGVV) threads the bilayer. The Extracellular portion of the chain corresponds to 702 to 704 (FRP). A helical transmembrane segment spans residues 705–725 (EFAGLAMAMSSVSVVANSLLL). Topologically, residues 726–804 (RNYVPPIRRG…AAGYQAKLRS (79 aa)) are cytoplasmic. Residues 740 to 801 (EKIVLELSGL…AVEAAGYQAK (62 aa)) form the HMA 2 domain. Residues cysteine 751 and cysteine 754 each coordinate Cu(+).

It belongs to the cation transport ATPase (P-type) (TC 3.A.3) family. Type IB subfamily. As to quaternary structure, interacts with CopZ probably in the CopZ Cu(+)-bound form.

It is found in the cell membrane. It catalyses the reaction Cu(+)(in) + ATP + H2O = Cu(+)(out) + ADP + phosphate + H(+). Its activity is regulated as follows. Activated by Cu(+) and Ag(+) and inhibited by vanadate. Activated by CopZ in its Cu(+)-bound form. In terms of biological role, probably involved in copper and silver export. In Archaeoglobus fulgidus (strain ATCC 49558 / DSM 4304 / JCM 9628 / NBRC 100126 / VC-16), this protein is Probable copper-exporting P-type ATPase (copA).